Here is a 164-residue protein sequence, read N- to C-terminus: MVSSAVKCGICRGVDGKYKCPKCGVRYCSLKCYKDAAKHVHKESEQPRAGTEANVEVVNNDKIINSSLAMNKTLKTKAFDDIYQNSAELQELLKYNTVKFHLAKVYRILSSTVNDGSSGKMNSDLQKELAVNYLNTLRYGGIHYNEAIEEFCQILLDKLNAVKK.

Zn(2+)-binding residues include C8, C11, C28, and C32. The HIT-type; degenerate zinc finger occupies 8–49 (CGICRGVDGKYKCPKCGVRYCSLKCYKDAAKHVHKESEQPRA).

This is Protein HIT1 (HIT1) from Saccharomyces cerevisiae (strain ATCC 204508 / S288c) (Baker's yeast).